A 549-amino-acid chain; its full sequence is DNA 3'-5' helicase XPB (549 aa).

A required for protein stability or solubility region spans residues 1–130 (MTDGPLIVQS…RNKKIAPMLG (130 aa)). A Helicase ATP-binding domain is found at 190 to 344 (ADSFWAGGSG…DVFSLIGPKR (155 aa)). 203 to 210 (LPCGAGKT) lines the ATP pocket. Residues 298–301 (DEVH) carry the DEAH box motif. Residues 399-545 (VVKSILAKHP…YIIRDADDLL (147 aa)) form the Helicase C-terminal domain.

It belongs to the helicase family. RAD25/XPB subfamily. In terms of assembly, monomer. Requires Mn(2+) as cofactor. The cofactor is Mg(2+).

The catalysed reaction is Couples ATP hydrolysis with the unwinding of duplex DNA by translocating in the 3'-5' direction.. It catalyses the reaction ATP + H2O = ADP + phosphate + H(+). In terms of biological role, ATP-dependent 3'-5' DNA helicase, unwinds 3'-overhangs, 3'- flaps, and splayed-arm DNA substrates but not 5'-overhangs, 5'-flap substrates, 3-way junctions or Holliday junctions. Not highly efficient in vitro. Requires ATP hydrolysis for helicase activity; the ATPase activity is DNA-dependent and requires a minimum of 4 single-stranded nucleotides (nt) with 6-10 nt providing all necessary interactions for full processive unwinding. The ATPase prefers ATP over CTP or GTP, is almost inactive with TTP. DNA helicase activity requires ATP or dATP and only acts when the 3'-overhang is &gt;20 nt. Capable of unwinding a DNA:RNA hybrid if the 3'-overhang is DNA. Also catalyzes ATP-independent annealing of complementary DNA strands; annealing requires Mg(2+). The sequence is that of DNA 3'-5' helicase XPB from Mycobacterium tuberculosis (strain ATCC 25618 / H37Rv).